The primary structure comprises 379 residues: MSTVFPVDSVGLVVPQTARFDEPLALACGRSLASYELVYETYGTLNASASNAVLICHALSGHHHAAGYHAATDRKPGWWDSCIGPGKPIDTNRFFVVSLNNLGGCNGSTGPSSVNPATGKPYGADFPVLTVEDWVHSQVRLGERLGIQQWAAVVGGSLGGMQALQWTISYPERVRHCVDIASAPKLSAQNIAFNEVARQAILTDPEFHGGSFQDQGVIPKRGLMLARMVGHITYLSDDSMGEKFGRELKSDKLNYDFHSVEFQVESYLRYQGEEFSGRFDANTYLLMTKALDYFDPAAAQGGDLAATLAHVTADYCIMSFTTDWRFSPARSREIVDALMAARKNVCYLEIDSPYGHDAFLIPTPRYMQGFSNYMNRIAI.

Residues 51 to 360 (NAVLICHALS…DSPYGHDAFL (310 aa)) enclose the AB hydrolase-1 domain. Ser157 functions as the Nucleophile in the catalytic mechanism. Arg227 is a binding site for substrate. Catalysis depends on residues Asp323 and His356. Asp357 serves as a coordination point for substrate.

The protein belongs to the AB hydrolase superfamily. MetX family. In terms of assembly, homodimer.

It is found in the cytoplasm. The enzyme catalyses L-homoserine + succinyl-CoA = O-succinyl-L-homoserine + CoA. It functions in the pathway amino-acid biosynthesis; L-methionine biosynthesis via de novo pathway; O-succinyl-L-homoserine from L-homoserine: step 1/1. Functionally, transfers a succinyl group from succinyl-CoA to L-homoserine, forming succinyl-L-homoserine. The sequence is that of Homoserine O-succinyltransferase from Pseudomonas putida (strain GB-1).